The chain runs to 231 residues: 2,3-bisphosphoglycerate-dependent phosphoglycerate mutase (231 aa).

Substrate-binding positions include 10–17 (RHGQSEWN), 23–24 (TG), Arg-62, 89–92 (ERHY), Lys-100, 116–117 (RR), and 185–186 (GN). The active-site Tele-phosphohistidine intermediate is the His-11. The Proton donor/acceptor role is filled by Glu-89.

This sequence belongs to the phosphoglycerate mutase family. BPG-dependent PGAM subfamily. As to quaternary structure, homodimer.

It catalyses the reaction (2R)-2-phosphoglycerate = (2R)-3-phosphoglycerate. It participates in carbohydrate degradation; glycolysis; pyruvate from D-glyceraldehyde 3-phosphate: step 3/5. Its function is as follows. Catalyzes the interconversion of 2-phosphoglycerate and 3-phosphoglycerate. In Buchnera aphidicola subsp. Acyrthosiphon pisum (strain APS) (Acyrthosiphon pisum symbiotic bacterium), this protein is 2,3-bisphosphoglycerate-dependent phosphoglycerate mutase.